The primary structure comprises 737 residues: Catalase-peroxidase (737 aa).

An N-terminal signal peptide occupies residues 1–23; the sequence is MLKKILPVLITLAIVHNTPTAWA. Positions 102-223 form a cross-link, tryptophyl-tyrosyl-methioninium (Trp-Tyr) (with M-249); that stretch reads WHGAGTYRIY…LAATQMGLIY (122 aa). His-103 functions as the Proton acceptor in the catalytic mechanism. Positions 223–249 form a cross-link, tryptophyl-tyrosyl-methioninium (Tyr-Met) (with W-102); it reads YVNPEGPNGKPDPVAAAKDIREAFARM. Residue His-264 coordinates heme b.

The protein belongs to the peroxidase family. Peroxidase/catalase subfamily. Homodimer or homotetramer. The cofactor is heme b. Formation of the three residue Trp-Tyr-Met cross-link is important for the catalase, but not the peroxidase activity of the enzyme.

It catalyses the reaction H2O2 + AH2 = A + 2 H2O. The catalysed reaction is 2 H2O2 = O2 + 2 H2O. In terms of biological role, bifunctional enzyme with both catalase and broad-spectrum peroxidase activity. The protein is Catalase-peroxidase of Yersinia pseudotuberculosis serotype I (strain IP32953).